Here is a 340-residue protein sequence, read N- to C-terminus: Armadillo repeat-containing protein 12 (340 aa).

The interval 1-101 (MGKTIPRFLE…NITRCVYLLE (101 aa)) is interaction with TBC1D15. ARM repeat units follow at residues 100–139 (LEAE…AFSG), 179–218 (LPDY…YLAQ), and 278–318 (SLHE…SLQC). The interval 321 to 340 (DLGSRPSSCRPSHSCFKTGK) is disordered. Residues 324-340 (SRPSSCRPSHSCFKTGK) are compositionally biased toward low complexity.

As to quaternary structure, interacts with TBC1D15, TBC1D21, GK2 and IMMT. Interacts with VDAC2 and VDAC3 in a TBC1D21-dependent manner. Interacts (via ARM domains) with RBBP4. In terms of tissue distribution, testis-specific.

The protein resides in the nucleus. The protein localises to the mitochondrion outer membrane. Essential for male fertility and sperm mitochondrial sheath formation. Required for proper mitochondrial elongation and coiling along the flagellum during the formation of the mitochondrial sheath. Facilitates the growth and aggressiveness of neuroblastoma cells. Increases the EZH2 activity and H3K27me3 levels in a RBBP4-dependent manner, and facilitates the enrichment of polycomb repressive complex 2 and H3K27me3 on gene promoters, resulting in transcriptional repression of tumor suppressors affecting the proliferation, invasion, and metastasis of tumor cells. The sequence is that of Armadillo repeat-containing protein 12 (Armc12) from Mus musculus (Mouse).